The chain runs to 315 residues: Histone-lysine N-methyltransferase SETMAR (315 aa).

Residues 74–137 (PGCACIKTPC…HCRNRVVQSG (64 aa)) enclose the Pre-SET domain. 9 residues coordinate Zn(2+): Cys76, Cys78, Cys83, Cys88, Cys90, Cys119, Cys123, Cys125, and Cys129. Residues 140-264 (FLLQVFQTEK…PGEELSYDYS (125 aa)) form the SET domain. S-adenosyl-L-methionine is bound by residues 150 to 152 (KGW), Tyr193, Arg221, and 224 to 225 (NH). Residues Cys227, Cys288, Cys290, and Cys295 each contribute to the Zn(2+) site. In terms of domain architecture, Post-SET spans 284-300 (PRKPCYCGAQSCATFLP).

This sequence belongs to the class V-like SAM-binding methyltransferase superfamily.

Its subcellular location is the nucleus. The protein localises to the chromosome. It catalyses the reaction L-lysyl(36)-[histone H3] + 2 S-adenosyl-L-methionine = N(6),N(6)-dimethyl-L-lysyl(36)-[histone H3] + 2 S-adenosyl-L-homocysteine + 2 H(+). In terms of biological role, histone methyltransferase that methylates 'Lys-4' and 'Lys-36' of histone H3, 2 specific tags for epigenetic transcriptional activation. Specifically mediates dimethylation of H3 'Lys-36'. The chain is Histone-lysine N-methyltransferase SETMAR from Rattus norvegicus (Rat).